The primary structure comprises 217 residues: MRAIENAAMAAGRATGLQLMERAGEAVAAAVPDWPAPRLAVVLCGPGNNGGDGFVVARLLAGRDWQVHVFASGWEAVFPELGPPGPVRAREGTDAVTNARRWRDEGGSCRPLTALAEVEAGRILVVDALLGIGQTRPCDDLLEPYWRARDGWDRAGAEVRTLSVDVPTGFDCDNGVALARRPFEADLVVSFHAEKPVHARLRAAGVTVAVADIGLSS.

A YjeF N-terminal domain is found at 1 to 217; it reads MRAIENAAMA…VAVADIGLSS (217 aa). 48-52 serves as a coordination point for (6S)-NADPHX; that stretch reads NNGGD. Residues asparagine 49 and aspartate 127 each contribute to the K(+) site. Residues 131 to 137 and aspartate 165 contribute to the (6S)-NADPHX site; that span reads GIGQTRP. Threonine 168 provides a ligand contact to K(+).

Belongs to the NnrE/AIBP family. K(+) is required as a cofactor.

The catalysed reaction is (6R)-NADHX = (6S)-NADHX. It catalyses the reaction (6R)-NADPHX = (6S)-NADPHX. Functionally, catalyzes the epimerization of the S- and R-forms of NAD(P)HX, a damaged form of NAD(P)H that is a result of enzymatic or heat-dependent hydration. This is a prerequisite for the S-specific NAD(P)H-hydrate dehydratase to allow the repair of both epimers of NAD(P)HX. The sequence is that of NAD(P)H-hydrate epimerase from Cereibacter sphaeroides (strain KD131 / KCTC 12085) (Rhodobacter sphaeroides).